Here is a 223-residue protein sequence, read N- to C-terminus: Small ribosomal subunit protein uS5 (223 aa).

Residues 1–66 (MPPQQQRGRG…AERAQAETEF (66 aa)) are disordered. Over residues 13–22 (RGPGGPGGPG) the composition is skewed to gly residues. A compositionally biased stretch (basic and acidic residues) spans 53-66 (GGDKAERAQAETEF). Positions 66-129 (FQERVVQIRR…SDARKALIRV (64 aa)) constitute an S5 DRBM domain.

It belongs to the universal ribosomal protein uS5 family. Part of the 30S ribosomal subunit. Contacts proteins S4 and S8.

In terms of biological role, with S4 and S12 plays an important role in translational accuracy. Its function is as follows. Located at the back of the 30S subunit body where it stabilizes the conformation of the head with respect to the body. The sequence is that of Small ribosomal subunit protein uS5 from Gloeobacter violaceus (strain ATCC 29082 / PCC 7421).